Consider the following 1196-residue polypeptide: Major DNA-binding protein (1196 aa).

A zinc finger spans residues 499–512 (CNLCTFDTRHACVH). 2 short sequence motifs (required for filament formation) span residues 843–844 (FW) and 1142–1144 (FNF). A disordered region spans residues 1158–1196 (GGPGAPGPAFAGRKRAFHGDDPFGEGPPDKKGDLTLDML). Residues 1170–1196 (RKRAFHGDDPFGEGPPDKKGDLTLDML) form a required for nuclear localization region. The segment covering 1174–1196 (FHGDDPFGEGPPDKKGDLTLDML) has biased composition (basic and acidic residues).

The protein belongs to the herpesviridae major DNA-binding protein family. As to quaternary structure, homooligomers. Forms double-helical filaments necessary for the formation of replication compartments within the host nucleus. Interacts with the origin-binding protein. Interacts with the helicase primase complex; this interaction stimulates primer synthesis activity of the helicase-primase complex. Interacts with the DNA polymerase. Interacts with the alkaline exonuclease; this interaction increases its nuclease processivity.

Its subcellular location is the host nucleus. Plays several crucial roles in viral infection. Participates in the opening of the viral DNA origin to initiate replication by interacting with the origin-binding protein. May disrupt loops, hairpins and other secondary structures present on ssDNA to reduce and eliminate pausing of viral DNA polymerase at specific sites during elongation. Promotes viral DNA recombination by performing strand-transfer, characterized by the ability to transfer a DNA strand from a linear duplex to a complementary single-stranded DNA circle. Can also catalyze the renaturation of complementary single strands. Additionally, reorganizes the host cell nucleus, leading to the formation of prereplicative sites and replication compartments. This process is driven by the protein which can form double-helical filaments in the absence of DNA. The protein is Major DNA-binding protein of Human herpesvirus 1 (strain KOS) (HHV-1).